A 658-amino-acid chain; its full sequence is Glycogen debranching enzyme (658 aa).

The active-site Nucleophile is the D336. Catalysis depends on E371, which acts as the Proton donor.

Belongs to the glycosyl hydrolase 13 family.

It carries out the reaction Hydrolysis of (1-&gt;6)-alpha-D-glucosidic linkages to branches with degrees of polymerization of three or four glucose residues in limit dextrin.. The protein operates within glycan degradation; glycogen degradation. Its function is as follows. Removes maltotriose and maltotetraose chains that are attached by 1,6-alpha-linkage to the limit dextrin main chain, generating a debranched limit dextrin. The sequence is that of Glycogen debranching enzyme from Klebsiella pneumoniae subsp. pneumoniae (strain ATCC 700721 / MGH 78578).